Consider the following 527-residue polypeptide: NADH-ubiquinone oxidoreductase chain 5 (527 aa).

Transmembrane regions (helical) follow at residues 3 to 23 (ISIFLIGFVFFMGGISVWLMP), 43 to 63 (FYFNSILFSFILFLVTFSVLV), 75 to 95 (FNYYYFVLLIFVGSMFSLNFS), 98 to 118 (IFTMLLSWDLLGISSFFLVLF), 141 to 161 (FMFVFFGLSVFSGYYFLSFSM), 168 to 188 (LLLLLTAFTKSAQFPFSSWLP), 197 to 217 (VSSLVHSSTLVTAGLILLMNF), 226 to 246 (FISFVLIIGLFTMFFSSLASL), 263 to 283 (MGFSMVTLGLGLSFISFIHLV), 318 to 338 (LPNFIQLQMLVTLFCLCGLIF), 357 to 377 (YMMFFSLMFFVSVFLTFGYSF), 398 to 418 (VFMNFLSLVLVIFSISFLWWM), 432 to 452 (VDFFGPLVFLFMMIFLSFLIL), and 507 to 527 (YLKSLNFNSVVVLIFIFFMIC).

The protein belongs to the complex I subunit 5 family.

The protein localises to the mitochondrion inner membrane. It catalyses the reaction a ubiquinone + NADH + 5 H(+)(in) = a ubiquinol + NAD(+) + 4 H(+)(out). Its function is as follows. Core subunit of the mitochondrial membrane respiratory chain NADH dehydrogenase (Complex I) that is believed to belong to the minimal assembly required for catalysis. Complex I functions in the transfer of electrons from NADH to the respiratory chain. The immediate electron acceptor for the enzyme is believed to be ubiquinone. This chain is NADH-ubiquinone oxidoreductase chain 5, found in Caenorhabditis elegans.